The following is a 145-amino-acid chain: Large ribosomal subunit protein uL16 (145 aa).

The protein belongs to the universal ribosomal protein uL16 family. As to quaternary structure, part of the 50S ribosomal subunit.

Functionally, binds 23S rRNA and is also seen to make contacts with the A and possibly P site tRNAs. This Lachnospira eligens (strain ATCC 27750 / DSM 3376 / VPI C15-48 / C15-B4) (Eubacterium eligens) protein is Large ribosomal subunit protein uL16.